The primary structure comprises 305 residues: Ribonuclease BN (305 aa).

Positions 64, 66, 68, 69, 141, 212, and 270 each coordinate Zn(2+). Residue aspartate 68 is the Proton acceptor of the active site.

This sequence belongs to the RNase Z family. RNase BN subfamily. As to quaternary structure, homodimer. It depends on Zn(2+) as a cofactor.

In terms of biological role, zinc phosphodiesterase, which has both exoribonuclease and endoribonuclease activities. In Salmonella gallinarum (strain 287/91 / NCTC 13346), this protein is Ribonuclease BN.